The following is a 144-amino-acid chain: D-aminoacyl-tRNA deacylase (144 aa).

Residues 136-137 (GP) carry the Gly-cisPro motif, important for rejection of L-amino acids motif.

This sequence belongs to the DTD family. Homodimer.

It is found in the cytoplasm. The catalysed reaction is glycyl-tRNA(Ala) + H2O = tRNA(Ala) + glycine + H(+). It catalyses the reaction a D-aminoacyl-tRNA + H2O = a tRNA + a D-alpha-amino acid + H(+). Functionally, an aminoacyl-tRNA editing enzyme that deacylates mischarged D-aminoacyl-tRNAs. Also deacylates mischarged glycyl-tRNA(Ala), protecting cells against glycine mischarging by AlaRS. Acts via tRNA-based rather than protein-based catalysis; rejects L-amino acids rather than detecting D-amino acids in the active site. By recycling D-aminoacyl-tRNA to D-amino acids and free tRNA molecules, this enzyme counteracts the toxicity associated with the formation of D-aminoacyl-tRNA entities in vivo and helps enforce protein L-homochirality. The protein is D-aminoacyl-tRNA deacylase of Haemophilus influenzae (strain ATCC 51907 / DSM 11121 / KW20 / Rd).